The primary structure comprises 446 residues: Asparagine--tRNA ligase (446 aa).

The protein belongs to the class-II aminoacyl-tRNA synthetase family. As to quaternary structure, homodimer.

The protein localises to the cytoplasm. The enzyme catalyses tRNA(Asn) + L-asparagine + ATP = L-asparaginyl-tRNA(Asn) + AMP + diphosphate + H(+). In Sorangium cellulosum (strain So ce56) (Polyangium cellulosum (strain So ce56)), this protein is Asparagine--tRNA ligase.